A 49-amino-acid polypeptide reads, in one-letter code: MVKRKANHVIPGMNDASAQGKGAGYNEELSNEPLTEAQKQNNKKRKKNQ.

Positions 1-49 (MVKRKANHVIPGMNDASAQGKGAGYNEELSNEPLTEAQKQNNKKRKKNQ) are disordered.

The protein belongs to the SspO family.

The protein resides in the spore core. The sequence is that of Small, acid-soluble spore protein O from Anoxybacillus flavithermus (strain DSM 21510 / WK1).